Here is a 168-residue protein sequence, read N- to C-terminus: Troponin I, cardiac muscle (168 aa).

The segment covering valine 128–valine 147 has biased composition (basic and acidic residues). Residues valine 128–glycine 168 form a disordered region.

The protein belongs to the troponin I family. In terms of assembly, binds to actin and tropomyosin.

Troponin I is the inhibitory subunit of troponin, the thin filament regulatory complex which confers calcium-sensitivity to striated muscle actomyosin ATPase activity. In Gallus gallus (Chicken), this protein is Troponin I, cardiac muscle (TNNI3).